Here is a 644-residue protein sequence, read N- to C-terminus: MLPSWKAFKAHNILRILTRFQSTKIPDAVIGIDLGTTNSAVAIMEGKVPRIIENAEGSRTTPSVVAFTKDGERLVGEPAKRQSVINSENTLFATKRLIGRRFEDAEVQRDINQVPFKIVKHSNGDAWVEARNRTYSPAQIGGFILNKMKETAEAYLAKSVKNAVVTVPAYFNDAQRQATKDAGQIIGLNVLRVVNEPTAAALAYGLDKSEPKVIAVFDLGGGTFDISILDIDNGIFEVKSTNGDTHLGGEDFDIYLLQEIISHFKKETGIDLSNDRMAVQRIREAAEKAKIELSSTLSTEINLPFITADAAGPKHIRMPFSRVQLENITAPLIDRTVDPVKKALKDARITASDISDVLLVGGMSRMPKVADTVKKLFGKDASKAVNPDEAVALGAAIQAAVLSGEVTDVLLLDVTPLSLGIETLGGVFTKLIPRNSTIPNKKSQIFSTAASGQTSVEVKVFQGERELVKDNKLIGNFTLAGIPPAPKGTPQIEVTFDIDANGIINVSAKDLASHKDSSITVAGASGLSDTEIDRMVNEAERYKNQDRARRNAIETANKADQLANDTENSIKEFEGKLDKTDSQRLKDQISSLRELVSRSQAGDEVNDDDVGTKIDNLRTSSMKLFEQLYKNSDNPETKNGRENK.

Belongs to the heat shock protein 70 family.

The protein localises to the mitochondrion matrix. It is found in the mitochondrion nucleoid. Plays a role in facilitating the assembly of some protein complexes inside the mitochondria. It may initiate the events that lead to refolding of imported precursors in the matrix space. In Saccharomyces cerevisiae (strain ATCC 204508 / S288c) (Baker's yeast), this protein is Heat shock protein SSC3, mitochondrial (ECM10).